The sequence spans 92 residues: FVPIFTYSELQRMQEKERNRGQKKSLGLQQRSEEVGSLDPTEAAEEEGKEVIKLTAPVEIGMRMNSRQLEKYRAALEGLLSEVLLSTQNAAK.

Residues 12-49 (RMQEKERNRGQKKSLGLQQRSEEVGSLDPTEAAEEEGK) form a disordered region.

It belongs to the motilin family.

The protein resides in the secreted. Functionally, plays an important role in the regulation of interdigestive gastrointestinal motility and indirectly causes rhythmic contraction of duodenal and colonic smooth muscle. In Equus caballus (Horse), this protein is Promotilin (MLN).